The primary structure comprises 70 residues: MKPGIHPEYAVITANCTCGNVIKVNSTAGKDLHLDVCGACHPFYTGTQKVVDTGGRIDKFNKRFGMLGKK.

Residues C16, C18, C37, and C40 each coordinate Zn(2+).

The protein belongs to the bacterial ribosomal protein bL31 family. Type A subfamily. Part of the 50S ribosomal subunit. Zn(2+) is required as a cofactor.

In terms of biological role, binds the 23S rRNA. The sequence is that of Large ribosomal subunit protein bL31 from Shewanella sp. (strain MR-4).